We begin with the raw amino-acid sequence, 116 residues long: NADH-ubiquinone oxidoreductase chain 3 (116 aa).

A run of 3 helical transmembrane segments spans residues 3–23 (LIMT…TVSF), 56–76 (FFLV…LLPL), and 87–107 (GTFF…IYEW).

This sequence belongs to the complex I subunit 3 family.

The protein resides in the mitochondrion membrane. It carries out the reaction a ubiquinone + NADH + 5 H(+)(in) = a ubiquinol + NAD(+) + 4 H(+)(out). In terms of biological role, core subunit of the mitochondrial membrane respiratory chain NADH dehydrogenase (Complex I) that is believed to belong to the minimal assembly required for catalysis. Complex I functions in the transfer of electrons from NADH to the respiratory chain. The immediate electron acceptor for the enzyme is believed to be ubiquinone. In Carassius auratus (Goldfish), this protein is NADH-ubiquinone oxidoreductase chain 3 (MT-ND3).